The following is a 300-amino-acid chain: Tyrosine recombinase XerC (300 aa).

Residues 2-88 form the Core-binding (CB) domain; that stretch reads TQEGKLEQQF…SLRSFYTFLL (87 aa). A Tyr recombinase domain is found at 109–294; sequence RLPKFFYSEE…TKEHLKSTYM (186 aa). Catalysis depends on residues R150, K174, H246, R249, and H272. Residue Y281 is the O-(3'-phospho-DNA)-tyrosine intermediate of the active site.

Belongs to the 'phage' integrase family. XerC subfamily. In terms of assembly, forms a cyclic heterotetrameric complex composed of two molecules of XerC and two molecules of XerD.

Its subcellular location is the cytoplasm. Site-specific tyrosine recombinase, which acts by catalyzing the cutting and rejoining of the recombining DNA molecules. The XerC-XerD complex is essential to convert dimers of the bacterial chromosome into monomers to permit their segregation at cell division. It also contributes to the segregational stability of plasmids. The sequence is that of Tyrosine recombinase XerC from Listeria monocytogenes serotype 4a (strain HCC23).